Here is a 414-residue protein sequence, read N- to C-terminus: 25-hydroxycholesterol 7-alpha-hydroxylase (414 aa).

Heme is bound at residue C354.

It belongs to the cytochrome P450 family. Heme is required as a cofactor. As to expression, highly expressed in brain; also expressed in liver and kidney.

Its subcellular location is the endoplasmic reticulum membrane. It is found in the microsome membrane. It carries out the reaction 25-hydroxycholesterol + reduced [NADPH--hemoprotein reductase] + O2 = 7alpha,25-dihydroxycholesterol + oxidized [NADPH--hemoprotein reductase] + H2O + H(+). It catalyses the reaction (25R)-cholest-5-ene-3beta,26-diol + reduced [NADPH--hemoprotein reductase] + O2 = (25R)-cholest-5-en-3beta,7alpha,26-triol + oxidized [NADPH--hemoprotein reductase] + H2O + H(+). The protein operates within lipid metabolism; bile acid biosynthesis. Oxysterol 7alpha-hydroxylase that mediates formation of 7-alpha,25-dihydroxycholesterol (7-alpha,25-OHC) from 25-hydroxycholesterol. Plays a key role in cell positioning and movement in lymphoid tissues: 7-alpha,25-dihydroxycholesterol (7-alpha,25-OHC) acts as a ligand for the G protein-coupled receptor GPR183/EBI2, a chemotactic receptor for a number of lymphoid cells. The polypeptide is 25-hydroxycholesterol 7-alpha-hydroxylase (Cyp7b1) (Rattus norvegicus (Rat)).